Consider the following 184-residue polypeptide: Peptide deformylase (184 aa).

Residues cysteine 111 and histidine 154 each coordinate Fe cation. The active site involves glutamate 155. Position 158 (histidine 158) interacts with Fe cation.

Belongs to the polypeptide deformylase family. Fe(2+) is required as a cofactor.

It catalyses the reaction N-terminal N-formyl-L-methionyl-[peptide] + H2O = N-terminal L-methionyl-[peptide] + formate. Removes the formyl group from the N-terminal Met of newly synthesized proteins. Requires at least a dipeptide for an efficient rate of reaction. N-terminal L-methionine is a prerequisite for activity but the enzyme has broad specificity at other positions. This Lacticaseibacillus casei (strain BL23) (Lactobacillus casei) protein is Peptide deformylase.